The sequence spans 416 residues: Probable intermembrane transport protein HI_1671 (416 aa).

A run of 8 helical transmembrane segments spans residues 62–82 (ILILMPFSLNYPLLSLHLLGI), 107–127 (IFICAVVMPITFALLVIMLWL), 138–158 (VLLFLGYIKAWVMFDVYLVAL), 172–192 (EINIYLIPFIFTALLTTLLFI), 263–283 (LIAGIIMLFPANLLPISGIYL), 306–326 (FVAFVVFFASIFVPISKIFIM), 347–367 (LLHLVHFVGRWSMLDLFVLAL), and 377–397 (IINFTVGPGAFYFGAAVFCTM).

The protein belongs to the PqiA family.

It is found in the cell inner membrane. In Haemophilus influenzae (strain ATCC 51907 / DSM 11121 / KW20 / Rd), this protein is Probable intermembrane transport protein HI_1671.